We begin with the raw amino-acid sequence, 327 residues long: Biotin synthase (327 aa).

One can recognise a Radical SAM core domain in the interval 48 to 278 (YCGDGVGLCM…DRHITVCGGR (231 aa)). Residues cysteine 66, cysteine 70, and cysteine 73 each contribute to the [4Fe-4S] cluster site. [2Fe-2S] cluster contacts are provided by serine 143 and cysteine 203.

The protein belongs to the radical SAM superfamily. Biotin synthase family. In terms of assembly, homodimer. It depends on [4Fe-4S] cluster as a cofactor. The cofactor is [2Fe-2S] cluster.

The enzyme catalyses (4R,5S)-dethiobiotin + (sulfur carrier)-SH + 2 reduced [2Fe-2S]-[ferredoxin] + 2 S-adenosyl-L-methionine = (sulfur carrier)-H + biotin + 2 5'-deoxyadenosine + 2 L-methionine + 2 oxidized [2Fe-2S]-[ferredoxin]. Its pathway is cofactor biosynthesis; biotin biosynthesis; biotin from 7,8-diaminononanoate: step 2/2. In terms of biological role, catalyzes the conversion of dethiobiotin (DTB) to biotin by the insertion of a sulfur atom into dethiobiotin via a radical-based mechanism. This Syntrophotalea carbinolica (strain DSM 2380 / NBRC 103641 / GraBd1) (Pelobacter carbinolicus) protein is Biotin synthase.